The chain runs to 159 residues: SsrA-binding protein (159 aa).

The protein belongs to the SmpB family.

Its subcellular location is the cytoplasm. Functionally, required for rescue of stalled ribosomes mediated by trans-translation. Binds to transfer-messenger RNA (tmRNA), required for stable association of tmRNA with ribosomes. tmRNA and SmpB together mimic tRNA shape, replacing the anticodon stem-loop with SmpB. tmRNA is encoded by the ssrA gene; the 2 termini fold to resemble tRNA(Ala) and it encodes a 'tag peptide', a short internal open reading frame. During trans-translation Ala-aminoacylated tmRNA acts like a tRNA, entering the A-site of stalled ribosomes, displacing the stalled mRNA. The ribosome then switches to translate the ORF on the tmRNA; the nascent peptide is terminated with the 'tag peptide' encoded by the tmRNA and targeted for degradation. The ribosome is freed to recommence translation, which seems to be the essential function of trans-translation. In Acidiphilium cryptum (strain JF-5), this protein is SsrA-binding protein.